The chain runs to 166 residues: MQKVTFKEETYQLEGKALKVGDKAPDVKLVNGDLQEVNLLKQGVRFQVVSALPSLTGSVCLLQAKHFNEQAGKLPSVSFSVISMDLPFSQGQICGAEGIKDLRILSDFRYKAFGENYGVLLGKGSLQGLLARSVFVLDDKGVVIYKEIVQNILEEPNYEALLKVLK.

One can recognise a Thioredoxin domain in the interval 18–166 (LKVGDKAPDV…NYEALLKVLK (149 aa)). Catalysis depends on cysteine 60, which acts as the Cysteine sulfenic acid (-SOH) intermediate. Cysteine 60 and cysteine 94 form a disulfide bridge.

Belongs to the peroxiredoxin family. Tpx subfamily. In terms of assembly, homodimer.

It catalyses the reaction a hydroperoxide + [thioredoxin]-dithiol = an alcohol + [thioredoxin]-disulfide + H2O. Thiol-specific peroxidase that catalyzes the reduction of hydrogen peroxide and organic hydroperoxides to water and alcohols, respectively. Plays a role in cell protection against oxidative stress by detoxifying peroxides. The polypeptide is Thiol peroxidase (Helicobacter pylori (strain J99 / ATCC 700824) (Campylobacter pylori J99)).